An 85-amino-acid polypeptide reads, in one-letter code: Small ribosomal subunit protein uS12m (85 aa).

It belongs to the universal ribosomal protein uS12 family.

It is found in the mitochondrion matrix. The protein localises to the kinetoplast. In terms of biological role, protein S12 is involved in the translation initiation step. The chain is Small ribosomal subunit protein uS12m (RPS12) from Leishmania tarentolae (Sauroleishmania tarentolae).